A 264-amino-acid chain; its full sequence is Type III pantothenate kinase 2 (264 aa).

Position 6-13 (D6–V13) interacts with ATP. Substrate-binding positions include Y100 and G107–R110. D109 functions as the Proton acceptor in the catalytic mechanism. Position 129 (D129) interacts with K(+). T132 provides a ligand contact to ATP. Position 184 (T184) interacts with substrate.

The protein belongs to the type III pantothenate kinase family. In terms of assembly, homodimer. Requires NH4(+) as cofactor. It depends on K(+) as a cofactor.

Its subcellular location is the cytoplasm. The catalysed reaction is (R)-pantothenate + ATP = (R)-4'-phosphopantothenate + ADP + H(+). It participates in cofactor biosynthesis; coenzyme A biosynthesis; CoA from (R)-pantothenate: step 1/5. Functionally, catalyzes the phosphorylation of pantothenate (Pan), the first step in CoA biosynthesis. This Symbiobacterium thermophilum (strain DSM 24528 / JCM 14929 / IAM 14863 / T) protein is Type III pantothenate kinase 2.